Reading from the N-terminus, the 362-residue chain is Peptide chain release factor 1 (362 aa).

Glutamine 240 is modified (N5-methylglutamine).

The protein belongs to the prokaryotic/mitochondrial release factor family. Methylated by PrmC. Methylation increases the termination efficiency of RF1.

It localises to the cytoplasm. Its function is as follows. Peptide chain release factor 1 directs the termination of translation in response to the peptide chain termination codons UAG and UAA. The sequence is that of Peptide chain release factor 1 from Bifidobacterium longum (strain NCC 2705).